Reading from the N-terminus, the 796-residue chain is ATP-dependent DNA helicase PIF6 (796 aa).

The interval 197–230 (RPTGLPSAHSGGKLPKHMGGDELNPQLEGSTTPG) is disordered. 255–262 (GSAGTGKT) is a binding site for ATP. The DNA-binding element occupies 636-655 (QAYVALSRVRSREDLMLTAF). 2 disordered regions span residues 692-719 (KGKT…PEEH) and 762-796 (TSSA…VDDD).

Belongs to the helicase family. PIF1 subfamily. As to quaternary structure, monomer. It depends on Mg(2+) as a cofactor.

It is found in the nucleus. It catalyses the reaction Couples ATP hydrolysis with the unwinding of duplex DNA at the replication fork by translocating in the 5'-3' direction. This creates two antiparallel DNA single strands (ssDNA). The leading ssDNA polymer is the template for DNA polymerase III holoenzyme which synthesizes a continuous strand.. The enzyme catalyses ATP + H2O = ADP + phosphate + H(+). DNA-dependent ATPase and 5'-3' DNA helicase required for the maintenance of genome stability. In Trypanosoma brucei brucei (strain 927/4 GUTat10.1), this protein is ATP-dependent DNA helicase PIF6.